The sequence spans 106 residues: Thioredoxin-like protein YdbP (106 aa).

Positions 1–106 constitute a Thioredoxin domain; sequence MKKITTNEQF…VTEFLSEHIS (106 aa). An intrachain disulfide couples cysteine 29 to cysteine 32.

Belongs to the thioredoxin family.

Its function is as follows. Participates in various redox reactions through the reversible oxidation of its active center dithiol to a disulfide and catalyzes dithiol-disulfide exchange reactions. This Bacillus subtilis (strain 168) protein is Thioredoxin-like protein YdbP (ydbP).